The following is a 564-amino-acid chain: Efflux pump hmp6 (564 aa).

Residues 1–25 (MEKHAEPEKSLGDKEFQEKELHEKP) are compositionally biased toward basic and acidic residues. A disordered region spans residues 1–46 (MEKHAEPEKSLGDKEFQEKELHEKPAPAASEDISGDSSVNKEDGPD). Helical transmembrane passes span 58-78 (LAVV…DTTI), 96-118 (VGWY…GKLY), 125-145 (IVFT…GVAP), 156-176 (IAGL…IHSV), 186-206 (GMIV…GGAF), 214-234 (WCFY…LFFF), 259-279 (FGTF…QMGG), and 289-309 (IIVL…VQFF). Residues asparagine 312 and asparagine 322 are each glycosylated (N-linked (GlcNAc...) asparagine). 4 helical membrane passes run 330–350 (IYMF…PIWF), 361–383 (SGIR…GALV), 395–415 (ASVV…VDAS), and 452–472 (IGTA…VSAA).

Belongs to the major facilitator superfamily. TCR/Tet family.

It is found in the cell membrane. Efflux pump that might be required for efficient secretion of hypothemycin or other secondary metabolies produced by the hypothemycin gene cluster. The sequence is that of Efflux pump hmp6 from Hypomyces subiculosus (Nectria subiculosa).